The primary structure comprises 62 residues: Potassium channel toxin kappa-KTx 1.4 (62 aa).

Residues 1 to 26 (MKSCLINVSLLILLLLPILGYASVNA) form the signal peptide. The propeptide occupies 27-38 (ESIDGENDFEEE). Intrachain disulfides connect C43–C61 and C47–C57.

It belongs to the short scorpion toxin superfamily. Potassium channel inhibitor kappa-KTx family. Kappa-KTx 1 subfamily. In terms of tissue distribution, expressed by the venom gland.

The protein resides in the secreted. Shows structural homology with WaTx suggesting that it acts as a cell-penetrating peptide (CPP) with defensive purpose that induces pain by specifically activating mammalian sensory neuron TRPA1 channels. Has no effect on the voltage-gated potassium channels tested. The protein is Potassium channel toxin kappa-KTx 1.4 of Heterometrus petersii (Asian forest scorpion).